Consider the following 302-residue polypeptide: Probable 2-(5''-triphosphoribosyl)-3'-dephosphocoenzyme-A synthase 1 (302 aa).

Belongs to the CitG/MdcB family.

It carries out the reaction 3'-dephospho-CoA + ATP = 2'-(5''-triphospho-alpha-D-ribosyl)-3'-dephospho-CoA + adenine. This chain is Probable 2-(5''-triphosphoribosyl)-3'-dephosphocoenzyme-A synthase 1, found in Salmonella typhi.